The following is a 91-amino-acid chain: UPF0298 protein M28_Spy0318 (91 aa).

Belongs to the UPF0298 family.

Its subcellular location is the cytoplasm. This is UPF0298 protein M28_Spy0318 from Streptococcus pyogenes serotype M28 (strain MGAS6180).